A 158-amino-acid chain; its full sequence is Male-specific protein scotti (158 aa).

The tract at residues 24 to 43 is disordered; the sequence is NVPDGNGDGDGDGDGDGNDA. Positions 30–42 are enriched in acidic residues; sequence GDGDGDGDGDGND.

Belongs to the male-specific scotti family.

Functionally, post-meiotically transcribed gene that has a role in late spermiogenesis; required for actin cone progression during spermatid individualization. In Drosophila virilis (Fruit fly), this protein is Male-specific protein scotti.